Consider the following 33-residue polypeptide: Beta-amanitin proprotein (33 aa).

A propeptide spanning residues 1-10 (MSDINATRLP) is cleaved from the precursor. Residues 11 to 18 (IWGIGCDP) constitute a cross-link (cyclopeptide (Ile-Pro)). Residues 12 to 16 (WGIGC) constitute a cross-link (2'-cysteinyl-6'-hydroxytryptophan sulfoxide (Trp-Cys)). A propeptide spanning residues 19–33 (CVGDDVTAVLTRGEA) is cleaved from the precursor.

The protein belongs to the MSDIN fungal toxin family. Post-translationally, processed by the macrocyclase-peptidase enzyme POPB to yield a toxic cyclic decapeptide. POPB first removes 10 residues from the N-terminus. Conformational trapping of the remaining peptide forces the enzyme to release this intermediate rather than proceed to macrocyclization. The enzyme rebinds the remaining peptide in a different conformation and catalyzes macrocyclization of the N-terminal 8 residues.

In terms of biological role, toxin belonging to the bicyclic octapeptides amatoxins that acts by binding non-competitively to RNA polymerase II and greatly slowing the elongation of transcripts from target promoters. The polypeptide is Beta-amanitin proprotein (Amanita pallidorosea).